A 106-amino-acid chain; its full sequence is Large ribosomal subunit protein P2 (106 aa).

The tract at residues A80–D106 is disordered.

This sequence belongs to the eukaryotic ribosomal protein P1/P2 family. As to quaternary structure, P1 and P2 exist as dimers at the large ribosomal subunit. Phosphorylated.

In terms of biological role, plays an important role in the elongation step of protein synthesis. The polypeptide is Large ribosomal subunit protein P2 (rplp2) (Dictyostelium discoideum (Social amoeba)).